A 414-amino-acid polypeptide reads, in one-letter code: Gamma-glutamyl phosphate reductase (414 aa).

This sequence belongs to the gamma-glutamyl phosphate reductase family.

The protein localises to the cytoplasm. It carries out the reaction L-glutamate 5-semialdehyde + phosphate + NADP(+) = L-glutamyl 5-phosphate + NADPH + H(+). It participates in amino-acid biosynthesis; L-proline biosynthesis; L-glutamate 5-semialdehyde from L-glutamate: step 2/2. In terms of biological role, catalyzes the NADPH-dependent reduction of L-glutamate 5-phosphate into L-glutamate 5-semialdehyde and phosphate. The product spontaneously undergoes cyclization to form 1-pyrroline-5-carboxylate. This Limosilactobacillus reuteri (strain DSM 20016) (Lactobacillus reuteri) protein is Gamma-glutamyl phosphate reductase.